We begin with the raw amino-acid sequence, 260 residues long: HTH-type transcriptional activator FapR (260 aa).

The HTH araC/xylS-type domain maps to 154–251; the sequence is ERIVTLLFSD…GVTPKKFEIG (98 aa). 2 DNA-binding regions (H-T-H motif) span residues 171–192 and 218–241; these read SDIAEEMHISEISVRKRLEQEC and IGMIASLVGYTSVSYFIKTFKEYY.

In terms of assembly, homodimer.

In terms of biological role, positive regulator of the expression of the 987P operon for the fimbrial protein in enterotoxigenic E.coli. The sequence is that of HTH-type transcriptional activator FapR from Escherichia coli.